A 301-amino-acid chain; its full sequence is UDP-N-acetylenolpyruvoylglucosamine reductase (301 aa).

The FAD-binding PCMH-type domain occupies 29 to 195 (KIGGPADVFV…VEAIFSLTRG (167 aa)). Residue Arg174 is part of the active site. Residue Ser224 is the Proton donor of the active site. The active site involves Glu294.

The protein belongs to the MurB family. Requires FAD as cofactor.

The protein resides in the cytoplasm. It carries out the reaction UDP-N-acetyl-alpha-D-muramate + NADP(+) = UDP-N-acetyl-3-O-(1-carboxyvinyl)-alpha-D-glucosamine + NADPH + H(+). It participates in cell wall biogenesis; peptidoglycan biosynthesis. Its function is as follows. Cell wall formation. This chain is UDP-N-acetylenolpyruvoylglucosamine reductase, found in Halalkalibacterium halodurans (strain ATCC BAA-125 / DSM 18197 / FERM 7344 / JCM 9153 / C-125) (Bacillus halodurans).